The chain runs to 1263 residues: Kinesin-like protein KIN-12E (1263 aa).

The interval 21 to 44 is disordered; it reads PAPSESLRSVPCTPEANTVSRDNH. Positions 35 to 44 are enriched in polar residues; the sequence is EANTVSRDNH. Residues 93-430 enclose the Kinesin motor domain; sequence NVQVIIRTRP…LKFAQRAKLI (338 aa). 174 to 181 contacts ATP; the sequence is GQTGSGKT. Coiled coils occupy residues 679–737, 764–805, 831–881, 905–966, 1091–1168, and 1193–1251; these read SKKL…KIRS, AEAH…AEEN, ALEV…KRLL, SEKS…HQSE, TDLL…TIQE, and LRKE…VLSL.

This sequence belongs to the TRAFAC class myosin-kinesin ATPase superfamily. Kinesin family. KIN-12 subfamily.

The protein is Kinesin-like protein KIN-12E of Arabidopsis thaliana (Mouse-ear cress).